We begin with the raw amino-acid sequence, 229 residues long: Large ribosomal subunit protein uL1 (229 aa).

It belongs to the universal ribosomal protein uL1 family. Part of the 50S ribosomal subunit.

Binds directly to 23S rRNA. The L1 stalk is quite mobile in the ribosome, and is involved in E site tRNA release. Functionally, protein L1 is also a translational repressor protein, it controls the translation of the L11 operon by binding to its mRNA. The polypeptide is Large ribosomal subunit protein uL1 (Clostridium botulinum (strain ATCC 19397 / Type A)).